Consider the following 1176-residue polypeptide: Chromosome partition protein Smc (1176 aa).

32-39 (PNGCGKSN) lines the ATP pocket. A coiled-coil region spans residues 169–506 (GVSRYKERRR…VKLQEDVQKQ (338 aa)). Positions 521–623 (LGRLWQKLHI…TAPDLGQALA (103 aa)) constitute an SMC hinge domain. Coiled coils occupy residues 653-947 (DSEQ…LAAM) and 987-1024 (ERKEFLDSQQQDLLTAIDTLEDAIRKIDRETRELLQAT).

Belongs to the SMC family. As to quaternary structure, homodimer.

Its subcellular location is the cytoplasm. Its function is as follows. Required for chromosome condensation and partitioning. In Bordetella petrii (strain ATCC BAA-461 / DSM 12804 / CCUG 43448), this protein is Chromosome partition protein Smc.